Reading from the N-terminus, the 475-residue chain is UDP-N-acetylmuramoylalanine--D-glutamate ligase (475 aa).

G130 to T136 serves as a coordination point for ATP.

This sequence belongs to the MurCDEF family.

It is found in the cytoplasm. The enzyme catalyses UDP-N-acetyl-alpha-D-muramoyl-L-alanine + D-glutamate + ATP = UDP-N-acetyl-alpha-D-muramoyl-L-alanyl-D-glutamate + ADP + phosphate + H(+). It participates in cell wall biogenesis; peptidoglycan biosynthesis. Its function is as follows. Cell wall formation. Catalyzes the addition of glutamate to the nucleotide precursor UDP-N-acetylmuramoyl-L-alanine (UMA). The polypeptide is UDP-N-acetylmuramoylalanine--D-glutamate ligase (Corynebacterium efficiens (strain DSM 44549 / YS-314 / AJ 12310 / JCM 11189 / NBRC 100395)).